The primary structure comprises 236 residues: 2,3,4,5-tetrahydropyridine-2,6-dicarboxylate N-acetyltransferase (236 aa).

It belongs to the transferase hexapeptide repeat family. DapH subfamily.

The enzyme catalyses (S)-2,3,4,5-tetrahydrodipicolinate + acetyl-CoA + H2O = L-2-acetamido-6-oxoheptanedioate + CoA. Its pathway is amino-acid biosynthesis; L-lysine biosynthesis via DAP pathway; LL-2,6-diaminopimelate from (S)-tetrahydrodipicolinate (acetylase route): step 1/3. Catalyzes the transfer of an acetyl group from acetyl-CoA to tetrahydrodipicolinate. This Oceanobacillus iheyensis (strain DSM 14371 / CIP 107618 / JCM 11309 / KCTC 3954 / HTE831) protein is 2,3,4,5-tetrahydropyridine-2,6-dicarboxylate N-acetyltransferase.